An 881-amino-acid polypeptide reads, in one-letter code: DNA mismatch repair protein MutS (881 aa).

632–639 (GPNMGGKS) serves as a coordination point for ATP.

The protein belongs to the DNA mismatch repair MutS family.

In terms of biological role, this protein is involved in the repair of mismatches in DNA. It is possible that it carries out the mismatch recognition step. This protein has a weak ATPase activity. The chain is DNA mismatch repair protein MutS from Acinetobacter baylyi (strain ATCC 33305 / BD413 / ADP1).